The chain runs to 358 residues: Cyclin-dependent kinase 10 (358 aa).

The 285-residue stretch at phenylalanine 37–phenylalanine 321 folds into the Protein kinase domain. ATP-binding positions include isoleucine 43–valine 51 and lysine 66. The Proton acceptor role is filled by aspartate 161. Position 194 is a phosphothreonine (threonine 194). A disordered region spans residues leucine 332 to proline 358.

It belongs to the protein kinase superfamily. CMGC Ser/Thr protein kinase family. CDC2/CDKX subfamily. As to quaternary structure, heterodimer with CCNQ, the interaction is required for kinase activity. Interacts with ETS2. Interacts with PRK2.

It is found in the cytoplasm. The protein localises to the cytoskeleton. The protein resides in the cilium basal body. The catalysed reaction is L-seryl-[protein] + ATP = O-phospho-L-seryl-[protein] + ADP + H(+). It catalyses the reaction L-threonyl-[protein] + ATP = O-phospho-L-threonyl-[protein] + ADP + H(+). In terms of biological role, cyclin-dependent kinase that phosphorylates the transcription factor ETS2 (in vitro) and positively controls its proteasomal degradation (in cells). Involved in the regulation of actin cytoskeleton organization through the phosphorylation of actin dynamics regulators such as PKN2. Is a negative regulator of ciliogenesis through phosphorylation of PKN2 and promotion of RhoA signaling. The protein is Cyclin-dependent kinase 10 (Cdk10) of Rattus norvegicus (Rat).